The chain runs to 274 residues: 3-methyl-2-oxobutanoate hydroxymethyltransferase (274 aa).

Mg(2+) contacts are provided by Asp-46 and Asp-85. Residues 46–47 (DS), Asp-85, and Lys-114 contribute to the 3-methyl-2-oxobutanoate site. Glu-116 lines the Mg(2+) pocket. The Proton acceptor role is filled by Glu-183.

Belongs to the PanB family. As to quaternary structure, homodecamer; pentamer of dimers. Mg(2+) serves as cofactor.

The protein resides in the cytoplasm. It carries out the reaction 3-methyl-2-oxobutanoate + (6R)-5,10-methylene-5,6,7,8-tetrahydrofolate + H2O = 2-dehydropantoate + (6S)-5,6,7,8-tetrahydrofolate. It participates in cofactor biosynthesis; coenzyme A biosynthesis. Functionally, catalyzes the reversible reaction in which hydroxymethyl group from 5,10-methylenetetrahydrofolate is transferred onto alpha-ketoisovalerate to form ketopantoate. The chain is 3-methyl-2-oxobutanoate hydroxymethyltransferase from Aeropyrum pernix (strain ATCC 700893 / DSM 11879 / JCM 9820 / NBRC 100138 / K1).